The chain runs to 603 residues: NADPH-dependent diflavin oxidoreductase 1 (603 aa).

A Flavodoxin-like domain is found at 8-152; it reads VLVLYGSETG…SFVRWTGRLY (145 aa). Residues 14-19, 61-64, 99-108, and Glu-134 contribute to the FMN site; these read SETGNA, STTG, and LGDSTYLKFN. The 248-residue stretch at 210–457 folds into the FAD-binding FR-type domain; that stretch reads PDGWTATLVG…RKPVLSPIHG (248 aa). Residues Arg-358, 388–391, and 429–432 contribute to the FAD site; these read RDFS and GLCS. NADP(+) contacts are provided by residues Thr-472, 528–529, and 534–538; these read SR and KIYVQ. Residue Trp-603 participates in FAD binding.

This sequence belongs to the NADPH-dependent diflavin oxidoreductase NDOR1 family. The protein in the N-terminal section; belongs to the flavodoxin family. In the C-terminal section; belongs to the flavoprotein pyridine nucleotide cytochrome reductase family. As to quaternary structure, interacts with DRE2; as part of the cytosolic iron-sulfur (Fe-S) protein assembly (CIA) machinery. It depends on FAD as a cofactor. The cofactor is FMN.

Its subcellular location is the cytoplasm. The protein resides in the mitochondrion. It carries out the reaction 2 oxidized [2Fe-2S]-[protein] + NADPH = 2 reduced [2Fe-2S]-[protein] + NADP(+) + H(+). NADPH-dependent reductase which is a central component of the cytosolic iron-sulfur (Fe-S) protein assembly (CIA) machinery. Transfers electrons from NADPH via its FAD and FMN prosthetic groups to the [2Fe-2S] cluster of DRE2, another key component of the CIA machinery. In turn, this reduced cluster provides electrons for assembly of cytosolic iron-sulfur cluster proteins. Positively controls H(2)O(2)-induced cell death. This chain is NADPH-dependent diflavin oxidoreductase 1, found in Gibberella zeae (strain ATCC MYA-4620 / CBS 123657 / FGSC 9075 / NRRL 31084 / PH-1) (Wheat head blight fungus).